An 898-amino-acid chain; its full sequence is Tight junction protein ZO-3 (898 aa).

The PDZ 1 domain maps to 11-93; that stretch reads TATLCRDPRR…LANITVKRPR (83 aa). The tract at residues 98 to 165 is disordered; the sequence is PATKAGTSGR…SPGGNSEANG (68 aa). 5 positions are modified to phosphoserine: Ser128, Ser156, Ser161, Ser195, and Ser313. Residues 187 to 264 form the PDZ 2 domain; that stretch reads SVLVRRTESE…KLTLLVLRDR (78 aa). A disordered region spans residues 295–368; sequence LSQAVPSHVP…QSAEDRGYSP (74 aa). Residues 312 to 349 show a composition bias toward basic and acidic residues; it reads RSLDSDGTDSPRDSPPLRRENSLDSRTISEPDAPRHSS. At Thr319 the chain carries Phosphothreonine. 2 positions are modified to phosphoserine: Ser321 and Ser360. In terms of domain architecture, PDZ 3 spans 369 to 435; it reads DSRVVRFHKG…LTREEAVQFL (67 aa). The 75-residue stretch at 464 to 538 folds into the SH3 domain; that stretch reads GDSFYIRTHF…PNQSRAEQLA (75 aa). Residues 569–750 enclose the Guanylate kinase-like domain; it reads LRRGAKKSTQ…WYQELKAVVR (182 aa). At Ser580 the chain carries Phosphoserine. The tract at residues 759-898 is disordered; that stretch reads TAEDQLDNSS…GYDWGPATDL (140 aa). Residues 762 to 772 are compositionally biased toward acidic residues; sequence DQLDNSSEDNL. Over residues 780–790 the composition is skewed to low complexity; sequence ADSSADLSCDS. The segment covering 796 to 814 has biased composition (acidic residues); the sequence is YETDGEGYTDGEGYTDVDE. The span at 831–841 shows a compositional bias: basic and acidic residues; sequence EEPRSPRDHGR. Phosphoserine is present on residues Ser835, Ser884, and Ser885.

It belongs to the MAGUK family. In terms of assembly, heterodimer with TJP1. Interacts with UBN1. Interacts with occludin OCLN and claudins. Interacts with PATJ. Interacts with FASLG. Interacts with CCND1. Phosphorylated.

Its subcellular location is the cell membrane. It is found in the cell junction. It localises to the tight junction. The protein localises to the nucleus. Functionally, TJP1, TJP2, and TJP3 are closely related scaffolding proteins that link tight junction (TJ) transmembrane proteins such as claudins, junctional adhesion molecules, and occludin to the actin cytoskeleton. The tight junction acts to limit movement of substances through the paracellular space and as a boundary between the compositionally distinct apical and basolateral plasma membrane domains of epithelial and endothelial cells. Binds and recruits PATJ to tight junctions where it connects and stabilizes apical and lateral components of tight junctions. Promotes cell-cycle progression through the sequestration of cyclin D1 (CCND1) at tight junctions during mitosis which prevents CCND1 degradation during M-phase and enables S-phase transition. With TJP1 and TJP2, participates in the junctional retention and stability of the transcription factor DBPA, but is not involved in its shuttling to the nucleus. Contrary to TJP2, TJP3 is dispensable for individual viability, embryonic development, epithelial differentiation, and the establishment of TJs, at least in the laboratory environment. This chain is Tight junction protein ZO-3 (TJP3), found in Canis lupus familiaris (Dog).